A 344-amino-acid polypeptide reads, in one-letter code: L-rhamnose-proton symporter (344 aa).

The next 10 membrane-spanning stretches (helical) occupy residues 5–25 (ILLGIFWHFVGATSAACFYAP), 38–58 (WAIAGIFSWILLPWGISYWLL), 72–92 (ILLPVFLFGAMWGIGNIGYGL), 101–121 (MGIGIAIGITLIVGTLMTPII), 137–157 (TLIGVVIAVVGVAVVSYAGLL), 175–195 (LALAVMCGIFSAGMSFAMSAA), 214–234 (LPSYVVIMGGGAIINLGFCII), 259–279 (ILFSALGGIMWYFQFFFYAWG), 289–309 (FMSWMLHMSFYVLCGGIVGLL), and 323–343 (VLCIGCLIIVLAANIVGLGMA).

This sequence belongs to the L-rhamnose transporter (TC 2.A.7.6) family.

It localises to the cell inner membrane. It catalyses the reaction L-rhamnopyranose(in) + H(+)(in) = L-rhamnopyranose(out) + H(+)(out). Its function is as follows. Uptake of L-rhamnose across the cytoplasmic membrane with the concomitant transport of protons into the cell (symport system). The chain is L-rhamnose-proton symporter from Mannheimia succiniciproducens (strain KCTC 0769BP / MBEL55E).